The sequence spans 700 residues: DNA ligase (700 aa).

Residues D42 to D46, S91 to L92, and E126 each bind NAD(+). K128 (N6-AMP-lysine intermediate) is an active-site residue. NAD(+)-binding residues include R149, E184, K300, and K324. The Zn(2+) site is built by C418, C421, C436, and C441. Residues T598–D686 enclose the BRCT domain.

Belongs to the NAD-dependent DNA ligase family. LigA subfamily. Mn(2+) serves as cofactor.

The catalysed reaction is NAD(+) + (deoxyribonucleotide)n-3'-hydroxyl + 5'-phospho-(deoxyribonucleotide)m = (deoxyribonucleotide)n+m + AMP + beta-nicotinamide D-nucleotide.. Functionally, DNA ligase that catalyzes the formation of phosphodiester linkages between 5'-phosphoryl and 3'-hydroxyl groups in double-stranded DNA using NAD as a coenzyme and as the energy source for the reaction. It is essential for DNA replication and repair of damaged DNA. This chain is DNA ligase, found in Deinococcus radiodurans (strain ATCC 13939 / DSM 20539 / JCM 16871 / CCUG 27074 / LMG 4051 / NBRC 15346 / NCIMB 9279 / VKM B-1422 / R1).